The primary structure comprises 277 residues: Diaminopimelate epimerase (277 aa).

Substrate is bound by residues Asn-15 and Asn-74. Residue Cys-83 is the Proton donor of the active site. Residues 84–85 (GN), Asn-159, Asn-194, and 212–213 (ER) each bind substrate. Cys-221 serves as the catalytic Proton acceptor. A substrate-binding site is contributed by 222–223 (GT).

It belongs to the diaminopimelate epimerase family. Homodimer.

The protein resides in the cytoplasm. The enzyme catalyses (2S,6S)-2,6-diaminopimelate = meso-2,6-diaminopimelate. It functions in the pathway amino-acid biosynthesis; L-lysine biosynthesis via DAP pathway; DL-2,6-diaminopimelate from LL-2,6-diaminopimelate: step 1/1. Catalyzes the stereoinversion of LL-2,6-diaminopimelate (L,L-DAP) to meso-diaminopimelate (meso-DAP), a precursor of L-lysine and an essential component of the bacterial peptidoglycan. This chain is Diaminopimelate epimerase, found in Corynebacterium glutamicum (strain R).